Here is a 139-residue protein sequence, read N- to C-terminus: ATP synthase epsilon chain (139 aa).

Residues 89 to 110 are disordered; it reads EARAEQARAEAEARRREAQSEH.

It belongs to the ATPase epsilon chain family. F-type ATPases have 2 components, CF(1) - the catalytic core - and CF(0) - the membrane proton channel. CF(1) has five subunits: alpha(3), beta(3), gamma(1), delta(1), epsilon(1). CF(0) has three main subunits: a, b and c.

The protein resides in the cell membrane. Its function is as follows. Produces ATP from ADP in the presence of a proton gradient across the membrane. This chain is ATP synthase epsilon chain, found in Chloroflexus aggregans (strain MD-66 / DSM 9485).